The sequence spans 369 residues: 3-dehydroquinate synthase (369 aa).

Residues D75–K80, G109–D113, T133–T134, K146, K155, and T173–T176 contribute to the NAD(+) site. Zn(2+)-binding residues include E188, H251, and H268.

This sequence belongs to the sugar phosphate cyclases superfamily. Dehydroquinate synthase family. The cofactor is Co(2+). Requires Zn(2+) as cofactor. NAD(+) serves as cofactor.

Its subcellular location is the cytoplasm. It carries out the reaction 7-phospho-2-dehydro-3-deoxy-D-arabino-heptonate = 3-dehydroquinate + phosphate. It participates in metabolic intermediate biosynthesis; chorismate biosynthesis; chorismate from D-erythrose 4-phosphate and phosphoenolpyruvate: step 2/7. In terms of biological role, catalyzes the conversion of 3-deoxy-D-arabino-heptulosonate 7-phosphate (DAHP) to dehydroquinate (DHQ). In Legionella pneumophila (strain Paris), this protein is 3-dehydroquinate synthase.